The sequence spans 407 residues: MAAAAAPLADDGDGIVDRDMWLACAAPNSGRLPAVGSVVFYFVDGHAAQFCQFPAPLLEQLAVPGPRVFLCTVAAVRLRADALTNEAYAEITLDPVADHDVPRLAPAPAPAPAAAAGGQQLRYFVKTLMISDFDFRIRFSAPMADAKGVFPPLVDAKAVQPLLVKDLHGSPMTFDYGRKGKRVTLAKVWKKFRDDMDFVDGDSVIFMRRRDDDDDDGELYVGVRRQRTLERPLRNTMRRYRPPTPPQAAVQEAVLAAAGHAAAGERFTVAYRSRKDGDEFVVPREAVEEGLRARLTSLAEVEFVWAVEDGAPPIVGPRGKVTAIATGQLWRNLEIVWDGNSEMDMSANFWQVRPVEEVDISPSTPPPKRLKNCEIDDTASTSVSVDNGDEQVPTMRQRLEALIPDNI.

Positions 124–227 (FVKTLMISDF…ELYVGVRRQR (104 aa)) form a DNA-binding region, TF-B3.

The protein resides in the nucleus. This chain is B3 domain-containing protein Os07g0183200, found in Oryza sativa subsp. japonica (Rice).